The following is a 215-amino-acid chain: Small ribosomal subunit protein uS3 (215 aa).

One can recognise a KH type-2 domain in the interval 39–109 (IRKFIKKRLE…EVLVDVKEVK (71 aa)).

Belongs to the universal ribosomal protein uS3 family. As to quaternary structure, part of the 30S ribosomal subunit. Forms a tight complex with proteins S10 and S14.

Binds the lower part of the 30S subunit head. Binds mRNA in the 70S ribosome, positioning it for translation. This chain is Small ribosomal subunit protein uS3, found in Methylacidiphilum infernorum (isolate V4) (Methylokorus infernorum (strain V4)).